Consider the following 110-residue polypeptide: Lichenan-specific phosphotransferase enzyme IIA component (110 aa).

Positions 3–101 constitute a PTS EIIA type-3 domain; that stretch reads EEMEQIIFQI…AAEIIELYEK (99 aa). H77 serves as the catalytic Tele-phosphohistidine intermediate; by HPr.

The protein resides in the cytoplasm. Its function is as follows. The phosphoenolpyruvate-dependent sugar phosphotransferase system (PTS), a major carbohydrate active -transport system, catalyzes the phosphorylation of incoming sugar substrates concomitant with their translocation across the cell membrane. This system is involved in lichenan transport. The chain is Lichenan-specific phosphotransferase enzyme IIA component (licA) from Bacillus subtilis (strain 168).